The primary structure comprises 169 residues: Cytochrome c-type biogenesis protein CcmE (169 aa).

Topologically, residues 1–7 are cytoplasmic; the sequence is MTRKSRR. A helical; Signal-anchor for type II membrane protein membrane pass occupies residues 8–28; it reads LILIAACGAVLALALGLILSA. Over 29-169 the chain is Periplasmic; sequence MSGSIVFFRS…DATLGQRSER (141 aa). Heme is bound by residues H122 and Y126. A disordered region spans residues 135–169; it reads LKAQGRWQEGGGKEAPKDAAKPASADATLGQRSER. The segment covering 145–154 has biased composition (basic and acidic residues); the sequence is GGKEAPKDAA.

Belongs to the CcmE/CycJ family.

The protein localises to the cell inner membrane. In terms of biological role, heme chaperone required for the biogenesis of c-type cytochromes. Transiently binds heme delivered by CcmC and transfers the heme to apo-cytochromes in a process facilitated by CcmF and CcmH. The sequence is that of Cytochrome c-type biogenesis protein CcmE from Methylorubrum populi (strain ATCC BAA-705 / NCIMB 13946 / BJ001) (Methylobacterium populi).